A 129-amino-acid chain; its full sequence is Small ribosomal subunit protein uS11 (129 aa).

This sequence belongs to the universal ribosomal protein uS11 family. In terms of assembly, part of the 30S ribosomal subunit. Interacts with proteins S7 and S18. Binds to IF-3.

Functionally, located on the platform of the 30S subunit, it bridges several disparate RNA helices of the 16S rRNA. Forms part of the Shine-Dalgarno cleft in the 70S ribosome. The sequence is that of Small ribosomal subunit protein uS11 from Nitratidesulfovibrio vulgaris (strain ATCC 29579 / DSM 644 / CCUG 34227 / NCIMB 8303 / VKM B-1760 / Hildenborough) (Desulfovibrio vulgaris).